We begin with the raw amino-acid sequence, 252 residues long: Serine/threonine phosphatase stp (252 aa).

The span at 1–18 (MHAEFRTDRGRIRHHNED) shows a compositional bias: basic and acidic residues. The segment at 1-23 (MHAEFRTDRGRIRHHNEDNGGVF) is disordered. In terms of domain architecture, PPM-type phosphatase spans 2-242 (HAEFRTDRGR…DNITVLLVER (241 aa)). Aspartate 36, glycine 37, aspartate 194, and aspartate 233 together coordinate Mn(2+).

The protein belongs to the PP2C family. Mn(2+) serves as cofactor.

The protein resides in the cytoplasm. The protein localises to the membrane. The catalysed reaction is O-phospho-L-seryl-[protein] + H2O = L-seryl-[protein] + phosphate. It catalyses the reaction O-phospho-L-threonyl-[protein] + H2O = L-threonyl-[protein] + phosphate. Its function is as follows. Protein phosphatase that dephosphorylates EF-Tu. The chain is Serine/threonine phosphatase stp (stp) from Listeria welshimeri serovar 6b (strain ATCC 35897 / DSM 20650 / CCUG 15529 / CIP 8149 / NCTC 11857 / SLCC 5334 / V8).